We begin with the raw amino-acid sequence, 556 residues long: Threonylcarbamoyladenosine tRNA methylthiotransferase (556 aa).

The interval 17–57 (SATDPKPHDRQSARKNIVPRARKRNKNNIQEEEPPADSTIP) is disordered. The 109-residue stretch at 60-168 (QKIWIRTWGC…VVEVVEETIK (109 aa)) folds into the MTTase N-terminal domain. [4Fe-4S] cluster is bound by residues cysteine 69, cysteine 105, cysteine 134, cysteine 210, cysteine 214, and cysteine 217. A Radical SAM core domain is found at 196–427 (RKNPLIEIIS…QLFHSYDPYD (232 aa)). The region spanning 427–489 (DHKIGQKQQV…KHFMKGQPVQ (63 aa)) is the TRAM domain. A helical transmembrane segment spans residues 536-556 (VFLFLTALLAAVIAFVGTKLV).

The protein belongs to the methylthiotransferase family. CDKAL1 subfamily. [4Fe-4S] cluster serves as cofactor.

The protein localises to the endoplasmic reticulum membrane. The enzyme catalyses N(6)-L-threonylcarbamoyladenosine(37) in tRNA + (sulfur carrier)-SH + AH2 + 2 S-adenosyl-L-methionine = 2-methylsulfanyl-N(6)-L-threonylcarbamoyladenosine(37) in tRNA + (sulfur carrier)-H + 5'-deoxyadenosine + L-methionine + A + S-adenosyl-L-homocysteine + 2 H(+). In terms of biological role, catalyzes the methylthiolation of N6-threonylcarbamoyladenosine (t(6)A), leading to the formation of 2-methylthio-N6-threonylcarbamoyladenosine (ms(2)t(6)A) at position 37 in tRNAs that read codons beginning with adenine. The chain is Threonylcarbamoyladenosine tRNA methylthiotransferase (cdkal1) from Xenopus laevis (African clawed frog).